The following is a 159-amino-acid chain: Succinate dehydrogenase [ubiquinone] cytochrome b small subunit, mitochondrial (159 aa).

Residues 1–56 (MAVLLKLGVLCSGQGARALLLRSRVVRPAYVSAFLQDQPTQGRCGTQHIHLSPSHH) constitute a mitochondrion transit peptide. Topologically, residues 57-63 (SGSKAAS) are mitochondrial matrix. The helical transmembrane segment at 64 to 85 (LHWTSERVVSVLLLGLIPAGYL) threads the bilayer. Residues 86 to 90 (NPCSV) are Mitochondrial intermembrane-facing. A helical transmembrane segment spans residues 91 to 111 (VDYSLAAALTLHSHWGLGQVV). A heme b-binding site is contributed by His102. The Mitochondrial matrix portion of the chain corresponds to 112 to 120 (TDYVHGDTL). Tyr114 serves as a coordination point for a ubiquinone. Residues 121 to 142 (PKAARAGLLALSALTFAGLCYF) form a helical membrane-spanning segment. At 143–159 (NYHDVGICRAVAMLWKL) the chain is on the mitochondrial intermembrane side.

This sequence belongs to the CybS family. In terms of assembly, component of complex II composed of four subunits: the flavoprotein (FP) SDHA, iron-sulfur protein (IP) SDHB, and a cytochrome b560 composed of SDHC and SDHD.

The protein resides in the mitochondrion inner membrane. It functions in the pathway carbohydrate metabolism; tricarboxylic acid cycle. Membrane-anchoring subunit of succinate dehydrogenase (SDH) that is involved in complex II of the mitochondrial electron transport chain and is responsible for transferring electrons from succinate to ubiquinone (coenzyme Q). SDH also oxidizes malate to the non-canonical enol form of oxaloacetate, enol-oxaloacetate. Enol-oxaloacetate, which is a potent inhibitor of the succinate dehydrogenase activity, is further isomerized into keto-oxaloacetate. This is Succinate dehydrogenase [ubiquinone] cytochrome b small subunit, mitochondrial (Sdhd) from Mus musculus (Mouse).